Reading from the N-terminus, the 557-residue chain is Potassium-transporting ATPase potassium-binding subunit (557 aa).

A run of 12 helical transmembrane segments spans residues 5–25 (GFLL…PLGS), 63–83 (LCAI…MLLG), 132–152 (GLTV…FAFI), 170–190 (LLRI…LFLI), 253–273 (FVQM…FGEV), 283–303 (LLWA…WAEV), 329–349 (VLVS…AVIA), 356–376 (ALGG…FGGV), 379–399 (GLYG…LMIG), 416–436 (LTAL…ALAM), 484–504 (LLAF…MAIA), and 526–546 (LFVG…FIPA).

Belongs to the KdpA family. In terms of assembly, the system is composed of three essential subunits: KdpA, KdpB and KdpC.

The protein resides in the cell inner membrane. Functionally, part of the high-affinity ATP-driven potassium transport (or Kdp) system, which catalyzes the hydrolysis of ATP coupled with the electrogenic transport of potassium into the cytoplasm. This subunit binds the periplasmic potassium ions and delivers the ions to the membrane domain of KdpB through an intramembrane tunnel. The protein is Potassium-transporting ATPase potassium-binding subunit of Shigella boydii serotype 18 (strain CDC 3083-94 / BS512).